The primary structure comprises 268 residues: 4-hydroxy-tetrahydrodipicolinate reductase (268 aa).

An NAD(+)-binding site is contributed by 7–12 (GANGRM). Arg34 is an NADP(+) binding site. NAD(+) contacts are provided by residues 97-99 (GTT) and 121-124 (SENM). Catalysis depends on His155, which acts as the Proton donor/acceptor. His156 is a binding site for (S)-2,3,4,5-tetrahydrodipicolinate. The active-site Proton donor is the Lys159. 165-166 (GT) contributes to the (S)-2,3,4,5-tetrahydrodipicolinate binding site.

It belongs to the DapB family.

The protein localises to the cytoplasm. It catalyses the reaction (S)-2,3,4,5-tetrahydrodipicolinate + NAD(+) + H2O = (2S,4S)-4-hydroxy-2,3,4,5-tetrahydrodipicolinate + NADH + H(+). It carries out the reaction (S)-2,3,4,5-tetrahydrodipicolinate + NADP(+) + H2O = (2S,4S)-4-hydroxy-2,3,4,5-tetrahydrodipicolinate + NADPH + H(+). It participates in amino-acid biosynthesis; L-lysine biosynthesis via DAP pathway; (S)-tetrahydrodipicolinate from L-aspartate: step 4/4. Its function is as follows. Catalyzes the conversion of 4-hydroxy-tetrahydrodipicolinate (HTPA) to tetrahydrodipicolinate. In Bartonella bacilliformis (strain ATCC 35685 / KC583 / Herrer 020/F12,63), this protein is 4-hydroxy-tetrahydrodipicolinate reductase.